The chain runs to 1104 residues: MARRGKKPVVRTLEDLTLDSGYGGAADSVRSSNLSLCCSDSHPASPYGGSCWPPLADSMHSRHNSFDTVNTALVEDSEGLDCAGQHCSRLLPDLDEVPWTLQELEALLLRSRDPRAGPAVPGGLPKDALAKLSTLVSRALVRIAKEAQRLSLRFAKCTKYEIQSAMEIVLSWGLAAHCTAAALAALSLYNMSSAGGDRLGRGKSARCGLTFSVGRVYRWMVDSRVALRIHEHAAIYLTACMESLFRDIYSRVVASGVPRSCSGPGSGSGSGPGPSSGPGAAPAADKEREAPGGGAASGGACSAASSASGGSSCCAPPAAAAAAVPPAAAANHHHHHHHALHEAPKFTVETLEHTVNNDSEIWGLLQPYQHLICGKNASGVLCLPDSLNLHRDPQRSNKPGELPMFSQSELRTIEQSLLATRVGSIAELSDLVSRAMHHLQPLNAKHHGNGTPLHHKQGALYWEPEALYTLCYFMHCPQMEWENPNVEPSKVNLQVERPFLVLPPLMEWIRVAVAHAGHRRSFSMDSDDVRQAARLLLPGVDCEPRQLRADDCFCASRKLDAVAIEAKFKQDLGFRMLNCGRTDLVKQAVSLLGPDGINTMSEQGMTPLMYACVRGDEAMVQMLLDAGADLNVEVVSTPHKYPSVHPETRHWTALTFAVLHGHIPVVQLLLDAGAKVEGSVEHGEENYSETPLQLAAAVGNFELVSLLLERGADPLIGTMYRNGISTTPQGDMNSFSQAAAHGHRNVFRKLLAQPEKEKSDILSLEEILAEGTDLAETAPPPLCASRNSKAKLRALREAMYHSAEHGYVDVTIDIRSIGVPWTLHTWLESLRIAFQQHRRPLIQCLLKEFKTIQEEEYTEELVTQGLPLMFEILKASKNEVISQQLCVIFTHCYGPYPIPKLTEIKRKQTSRLDPHFLNNKEMSDVTFLVEGRPFYAHKVLLFTASPRFKALLSSKPTNDGTCIEIGYVKYSIFQLVMQYLYYGGPESLLIKNNEIMELLSAAKFFQLEALQRHCEIICAKSINTDNCVDIYNHAKFLGVTELSAYCEGYFLKNMMVLIENEAFKQLLYDKNGEGTGQDVLQDLQRTLAIRIQSIHLSSSKGSVV.

Residues 168 to 188 traverse the membrane as a helical segment; the sequence is IVLSWGLAAHCTAAALAALSL. The interval 260-301 is disordered; it reads SCSGPGSGSGSGPGPSSGPGAAPAADKEREAPGGGAASGGAC. A compositionally biased stretch (gly residues) spans 264–276; sequence PGSGSGSGPGPSS. ANK repeat units follow at residues 603–632, 649–678, 687–716, 730–759, and 825–854; these read QGMT…DLNV, RHWT…KVEG, YSET…DPLI, GDMN…KEKS, and TWLE…TIQE. Residues 923–989 enclose the BTB domain; that stretch reads SDVTFLVEGR…LYYGGPESLL (67 aa).

Its subcellular location is the membrane. This Homo sapiens (Human) protein is Ankyrin repeat- and BTB/POZ domain-containing protein 3.